We begin with the raw amino-acid sequence, 517 residues long: Protein NETWORKED 4B (517 aa).

2 disordered regions span residues 1–29 and 101–159; these read MASSTAQSKKQFKRSMTKKSHSWWWDSHN and LQKN…EDGD. The segment covering 10–21 has biased composition (basic residues); it reads KQFKRSMTKKSH. In terms of domain architecture, NAB spans 21–101; sequence HSWWWDSHNC…ERYDQASGEL (81 aa). The span at 107 to 119 shows a compositional bias: low complexity; the sequence is SEIQSQSSLEISS. Over residues 121-135 the composition is skewed to basic and acidic residues; sequence TKEKLSRRQSSHKEE. The stretch at 156-486 forms a coiled coil; it reads EDGDEALIRR…EQKREAIRQL (331 aa).

This sequence belongs to the NET family.

Plant-specific actin binding protein. May be part of a membrane-cytoskeletal adapter complex. This is Protein NETWORKED 4B from Arabidopsis thaliana (Mouse-ear cress).